The chain runs to 421 residues: MDLENKVKKMGLGHEQGFGAPCLKCKEKCEGFELHFWRKICRNCKCGQEEHDVLLSNEEDRKVGKLFEDTKYTTLIAKLKSDGIPMYKRNVMILTNPVAAKKNVSINTVTYEWAPPVQNQALARQYMQMLPKEKQPVAGSEGAQYRKKQLAKQLPAHDQDPSKCHELSPREVNEMEQFVKKYKSEALGVGDVKLPCEMDAQVPKQMNIPGGDRSTPAAVGAMEDKSAEHKRTQYSCYCCKLSMKEGDPAIYAERAGYDKLWHPACFVCSTCHELLVDMIYFWKNEKLYCGRHYCDSEKPRCAGCDELIFSNEYTQAENQNWHLKHFCCFDCDSILAGEIYVMVNDKPVCKPCYVKNHAVVCQGCHNAIDPEVQRVTYNNFSWHASTECFLCSCCSKCLIGQKFMPVEGMVFCSVECKKRMS.

The 108-residue stretch at 92–199 (MILTNPVAAK…GDVKLPCEMD (108 aa)) folds into the PET domain. LIM zinc-binding domains follow at residues 234–297 (YSCY…CDSE), 299–359 (PRCA…NHAV), and 362–421 (QGCH…KRMS).

The protein belongs to the prickle / espinas / testin family. Interacts via LIM domain 1 with ZYX. Interacts (via LIM domain 3) with ENAH and VASP. Interacts with ALKBH4, talin, actin, alpha-actinin, GRIP1 and PXN. Interacts (via LIM domain 2) with ACTL7A (via N-terminus). Heterodimer with ACTL7A; the heterodimer interacts with ENAH to form a heterotrimer.

It is found in the cytoplasm. It localises to the cell junction. Its subcellular location is the focal adhesion. Functionally, scaffold protein that may play a role in cell adhesion, cell spreading and in the reorganization of the actin cytoskeleton. Plays a role in the regulation of cell proliferation. May act as a tumor suppressor. The polypeptide is Testin (TES) (Nomascus leucogenys (Northern white-cheeked gibbon)).